The following is a 134-amino-acid chain: MLSPKRTKYRKHHRGRMRGKASRGNTVVFGDYALQSLEASWITSRQIEAARRAMTRQVRRGGQIWIRLFPDKPVTMRPAETRMGSGKGAPEFWVAVVRPGKVLYELKGVPESVARVALRLAASKLPVKTQILVK.

The disordered stretch occupies residues 1–21 (MLSPKRTKYRKHHRGRMRGKA).

This sequence belongs to the universal ribosomal protein uL16 family. Part of the 50S ribosomal subunit.

The protein localises to the plastid. Its subcellular location is the chloroplast. This chain is Large ribosomal subunit protein uL16c, found in Chlorella vulgaris (Green alga).